Here is a 359-residue protein sequence, read N- to C-terminus: Methylthioribose-1-phosphate isomerase (359 aa).

The Proton donor role is filled by Asp-235.

The protein belongs to the eIF-2B alpha/beta/delta subunits family. MtnA subfamily.

Its subcellular location is the cytoplasm. It is found in the nucleus. It carries out the reaction 5-(methylsulfanyl)-alpha-D-ribose 1-phosphate = 5-(methylsulfanyl)-D-ribulose 1-phosphate. It participates in amino-acid biosynthesis; L-methionine biosynthesis via salvage pathway; L-methionine from S-methyl-5-thio-alpha-D-ribose 1-phosphate: step 1/6. In terms of biological role, catalyzes the interconversion of methylthioribose-1-phosphate (MTR-1-P) into methylthioribulose-1-phosphate (MTRu-1-P). The sequence is that of Methylthioribose-1-phosphate isomerase (mri1) from Schizosaccharomyces pombe (strain 972 / ATCC 24843) (Fission yeast).